Here is a 138-residue protein sequence, read N- to C-terminus: Acidic phospholipase A2 Cvv-E6h (138 aa).

An N-terminal signal peptide occupies residues 1 to 16 (MRTLWIVAVLLLGVEG). Intrachain disulfides connect Cys-42-Cys-131, Cys-44-Cys-60, Cys-59-Cys-111, Cys-65-Cys-138, Cys-66-Cys-104, Cys-73-Cys-97, and Cys-91-Cys-102. Ca(2+)-binding residues include Tyr-43, Gly-45, and Gly-47. His-63 is a catalytic residue. Residue Asp-64 participates in Ca(2+) binding. Residue Asp-105 is part of the active site.

This sequence belongs to the phospholipase A2 family. Group II subfamily. D49 sub-subfamily. Ca(2+) is required as a cofactor. In terms of tissue distribution, expressed by the venom gland.

Its subcellular location is the secreted. The enzyme catalyses a 1,2-diacyl-sn-glycero-3-phosphocholine + H2O = a 1-acyl-sn-glycero-3-phosphocholine + a fatty acid + H(+). Snake venom phospholipase A2 (PLA2) that shows very low inhibition of ADP-induced platelet aggregation in platelet-rich plasma of human, rabbit and guinea pig. In vivo, shows efficient edema-inducing activities in rat paws. PLA2 catalyzes the calcium-dependent hydrolysis of the 2-acyl groups in 3-sn-phosphoglycerides. This chain is Acidic phospholipase A2 Cvv-E6h, found in Crotalus viridis viridis (Prairie rattlesnake).